Consider the following 66-residue polypeptide: COP-associated protein (66 aa).

The region spanning 1–66 (MKIDIPVKGM…AILDAGYELG (66 aa)) is the HMA domain. Cu cation contacts are provided by cysteine 12 and cysteine 15.

Its function is as follows. Part of a cation-transporting system which is associated with copper export out of the H.pylori cells. This Helicobacter felis (strain ATCC 49179 / CCUG 28539 / NCTC 12436 / CS1) protein is COP-associated protein (copP).